The following is a 432-amino-acid chain: Histidine--tRNA ligase (432 aa).

The protein belongs to the class-II aminoacyl-tRNA synthetase family. Homodimer.

It localises to the cytoplasm. The catalysed reaction is tRNA(His) + L-histidine + ATP = L-histidyl-tRNA(His) + AMP + diphosphate + H(+). This Ralstonia nicotianae (strain ATCC BAA-1114 / GMI1000) (Ralstonia solanacearum) protein is Histidine--tRNA ligase.